The primary structure comprises 312 residues: Malate dehydrogenase (312 aa).

NAD(+) contacts are provided by residues 7 to 12 (GAGNVG) and aspartate 32. Residues arginine 82 and arginine 88 each contribute to the substrate site. Residues asparagine 95 and 118–120 (VSN) contribute to the NAD(+) site. Asparagine 120 and arginine 151 together coordinate substrate. Histidine 175 functions as the Proton acceptor in the catalytic mechanism.

It belongs to the LDH/MDH superfamily. MDH type 3 family.

The enzyme catalyses (S)-malate + NAD(+) = oxaloacetate + NADH + H(+). Its function is as follows. Catalyzes the reversible oxidation of malate to oxaloacetate. The chain is Malate dehydrogenase from Cytophaga hutchinsonii (strain ATCC 33406 / DSM 1761 / CIP 103989 / NBRC 15051 / NCIMB 9469 / D465).